The primary structure comprises 177 residues: 3-hydroxydecanoyl-[acyl-carrier-protein] dehydratase (177 aa).

H76 is an active-site residue.

This sequence belongs to the thioester dehydratase family. FabA subfamily. As to quaternary structure, homodimer.

It is found in the cytoplasm. The catalysed reaction is a (3R)-hydroxyacyl-[ACP] = a (2E)-enoyl-[ACP] + H2O. It carries out the reaction (3R)-hydroxydecanoyl-[ACP] = (2E)-decenoyl-[ACP] + H2O. It catalyses the reaction (2E)-decenoyl-[ACP] = (3Z)-decenoyl-[ACP]. It participates in lipid metabolism; fatty acid biosynthesis. Its function is as follows. Necessary for the introduction of cis unsaturation into fatty acids. Catalyzes the dehydration of (3R)-3-hydroxydecanoyl-ACP to E-(2)-decenoyl-ACP and then its isomerization to Z-(3)-decenoyl-ACP. Can catalyze the dehydratase reaction for beta-hydroxyacyl-ACPs with saturated chain lengths up to 16:0, being most active on intermediate chain length. The sequence is that of 3-hydroxydecanoyl-[acyl-carrier-protein] dehydratase from Actinobacillus succinogenes (strain ATCC 55618 / DSM 22257 / CCUG 43843 / 130Z).